Reading from the N-terminus, the 559-residue chain is Heterochromatin protein 1-binding protein 3 (559 aa).

Positions 1–132 are disordered; sequence MATDLSEAEP…SKEKEKKVKK (132 aa). 2 stretches are compositionally biased toward basic and acidic residues: residues 51 to 68 and 96 to 128; these read TPPKSKPAEGGEEVKADA and EQPKEPENEEKGETKSSVETKKDDKDQSKEKEK. 3 consecutive H15 domains span residues 158-233, 256-331, and 339-414; these read SRPK…VVVS, QQVK…QLKK, and GGTL…QLCF. The short motif at 256 to 260 is the PxVxL motif element; the sequence is QQVKL. The interval 421 to 559 is disordered; it reads DVLYPEKQQD…AMRKSLRAKK (139 aa). A compositionally biased stretch (acidic residues) spans 429 to 459; sequence QDEDSEESQEEEEEESEEEEESEEEESEEEE. The span at 463 to 515 shows a compositional bias: basic residues; the sequence is KKRMQKRPPPKSRSRAPPMKRRESKPKPRKTPAAHQGKAKPPPKVKTPVKKAK. A compositionally biased stretch (low complexity) spans 516–533; that stretch reads PAAPAIKKPSGGSSSKKP. A compositionally biased stretch (basic residues) spans 549-559; it reads SAMRKSLRAKK.

The protein localises to the nucleus. It is found in the chromosome. In terms of biological role, component of heterochromatin that maintains heterochromatin integrity during G1/S progression and regulates the duration of G1 phase to critically influence cell proliferative capacity. The polypeptide is Heterochromatin protein 1-binding protein 3 (HP1BP3) (Gallus gallus (Chicken)).